Here is a 363-residue protein sequence, read N- to C-terminus: Cleavage and termination factor 1 (363 aa).

An RRM domain is found at 7-85 (NVVFVGNIPY…RKIRVEFPSN (79 aa)). The segment at 291–325 (QPASATSSPPSVPQKIPSSNHKSQQANGSDQGNEG) is disordered. The segment covering 306 to 322 (IPSSNHKSQQANGSDQG) has biased composition (polar residues).

In terms of assembly, interacts with res2.

It is found in the nucleus. Functionally, component of the cleavage factor I (CF I) involved in pre-mRNA 3'-end processing. The protein is Cleavage and termination factor 1 (ctf1) of Schizosaccharomyces pombe (strain 972 / ATCC 24843) (Fission yeast).